The chain runs to 513 residues: Bifunctional purine biosynthesis protein PurH (513 aa).

The MGS-like domain maps to 1–146 (MPRFALLSVS…KNHAHLTILT (146 aa)).

It belongs to the PurH family.

It carries out the reaction (6R)-10-formyltetrahydrofolate + 5-amino-1-(5-phospho-beta-D-ribosyl)imidazole-4-carboxamide = 5-formamido-1-(5-phospho-D-ribosyl)imidazole-4-carboxamide + (6S)-5,6,7,8-tetrahydrofolate. The catalysed reaction is IMP + H2O = 5-formamido-1-(5-phospho-D-ribosyl)imidazole-4-carboxamide. It functions in the pathway purine metabolism; IMP biosynthesis via de novo pathway; 5-formamido-1-(5-phospho-D-ribosyl)imidazole-4-carboxamide from 5-amino-1-(5-phospho-D-ribosyl)imidazole-4-carboxamide (10-formyl THF route): step 1/1. It participates in purine metabolism; IMP biosynthesis via de novo pathway; IMP from 5-formamido-1-(5-phospho-D-ribosyl)imidazole-4-carboxamide: step 1/1. This is Bifunctional purine biosynthesis protein PurH from Synechococcus elongatus (strain ATCC 33912 / PCC 7942 / FACHB-805) (Anacystis nidulans R2).